Here is a 362-residue protein sequence, read N- to C-terminus: Large ribosomal subunit protein uL3 (362 aa).

The disordered stretch occupies residues 340–362 (RPPKKKPPVQRPQITYVSVESKQ). Over residues 351 to 362 (PQITYVSVESKQ) the composition is skewed to polar residues.

This sequence belongs to the universal ribosomal protein uL3 family. Part of the 50S ribosomal subunit. Forms a cluster with proteins L14 and L24e.

Functionally, one of the primary rRNA binding proteins, it binds directly near the 3'-end of the 23S rRNA, where it nucleates assembly of the 50S subunit. This Pyrococcus horikoshii (strain ATCC 700860 / DSM 12428 / JCM 9974 / NBRC 100139 / OT-3) protein is Large ribosomal subunit protein uL3.